The chain runs to 340 residues: MPMNSVLVIGSGFLGGHIIRQLCERENLRIAAFDLFENEKLLHELHGQFTMYTGDLTKQGDIERVFEEFHPRVVIHTASPVHNLARDIYFEVNVDGTANIIKACQKFNVDALVYTSSAGVVFNGADLINVDESQPIPEVHMDAYNESKALAEKQVLEASSESLKTAALRVAGLFGPGDRQLVPGMLSVLKNGQTKFQLGDNLNLFDFTYIENAAYAHLLAMDNLLSSNPTANGQVFFITNGQVIYFWDFARAIWAHAGHVPPYIIKFPRPVGMLLATAAEWVCYFLKKEPGFTRFRVQFSCANRYFNIQKAEDVLKYHPIVDLEEGIRRTLAWMDTEKKH.

The active-site Proton acceptor is Tyr144. Lys148 contacts NAD(+).

This sequence belongs to the 3-beta-HSD family. As to quaternary structure, heterotetramer of erg25, erg26, erg27 and erg28. Erg28 acts as a scaffold to tether erg27 and other 4,4-demethylation-related enzymes, forming a demethylation enzyme complex, in the endoplasmic reticulum.

Its subcellular location is the endoplasmic reticulum membrane. The catalysed reaction is 4beta-methylzymosterol-4alpha-carboxylate + NADP(+) = 3-dehydro-4-methylzymosterol + CO2 + NADPH. Its pathway is steroid biosynthesis; zymosterol biosynthesis; zymosterol from lanosterol: step 4/6. It participates in steroid metabolism; ergosterol biosynthesis. Functionally, sterol-4-alpha-carboxylate 3-dehydrogenase; part of the third module of ergosterol biosynthesis pathway that includes by the late steps of the pathway. Erg26 is a catalytic component of the C-4 demethylation complex that catalyzes the oxidative decarboxylation that results in a reduction of the 3-beta-hydroxy group at the C-3 carbon to an oxo group. The third module or late pathway involves the ergosterol synthesis itself through consecutive reactions that mainly occur in the endoplasmic reticulum (ER) membrane. Firstly, the squalene synthase erg9 catalyzes the condensation of 2 farnesyl pyrophosphate moieties to form squalene, which is the precursor of all steroids. Secondly, squalene is converted into lanosterol by the consecutive action of the squalene epoxidase erg1 and the lanosterol synthase erg7. The lanosterol 14-alpha-demethylase erg11/cyp1 catalyzes C14-demethylation of lanosterol to produce 4,4'-dimethyl cholesta-8,14,24-triene-3-beta-ol. In the next steps, a complex process involving various demethylation, reduction and desaturation reactions catalyzed by the C-14 reductase erg24 and the C-4 demethylation complex erg25-erg26-erg27 leads to the production of zymosterol. Erg28 likely functions in the C-4 demethylation complex reaction by tethering erg26 and Erg27 to the endoplasmic reticulum or to facilitate interaction between these proteins. Then, the sterol 24-C-methyltransferase erg6 catalyzes the methyl transfer from S-adenosyl-methionine to the C-24 of zymosterol to form fecosterol. The C-8 sterol isomerase erg2 catalyzes the reaction which results in unsaturation at C-7 in the B ring of sterols and thus converts fecosterol to episterol. The sterol-C5-desaturases erg31 and erg32 then catalyze the introduction of a C-5 double bond in the B ring to produce 5-dehydroepisterol. The C-22 sterol desaturase erg5 further converts 5-dehydroepisterol into ergosta-5,7,22,24(28)-tetraen-3beta-ol by forming the C-22(23) double bond in the sterol side chain. Finally, ergosta-5,7,22,24(28)-tetraen-3beta-ol is substrate of the C-24(28) sterol reductase erg4 to produce ergosterol. In the genus Schizosaccharomyces, a second route exists between lanosterol and fecosterol, via the methylation of lanosterol to eburicol by erg6, followed by C14-demethylation by erg11/cyp1 and C4-demethylation by the demethylation complex erg25-erg26-erg27. This Schizosaccharomyces pombe (strain 972 / ATCC 24843) (Fission yeast) protein is Sterol-4-alpha-carboxylate 3-dehydrogenase erg26, decarboxylating.